Consider the following 741-residue polypeptide: Methionine--tRNA ligase (741 aa).

A compositionally biased stretch (polar residues) spans 1 to 22; that stretch reads MTMKQYTMSKMNAETQTQTRES. Residues 1–25 form a disordered region; it reads MTMKQYTMSKMNAETQTQTRESFPT. The short motif at 36-46 is the 'HIGH' region element; it reads PYANGDLHIGH. The Zn(2+) site is built by cysteine 167, cysteine 170, cysteine 179, and cysteine 183. The tract at residues 309 to 329 is disordered; it reads VRSHSSSSAKDSSEGNSPSNI. Over residues 311–329 the composition is skewed to low complexity; sequence SHSSSSAKDSSEGNSPSNI. Residue threonine 381 coordinates ATP. The interval 591–629 is disordered; that stretch reads KLADRVTDPTDDDDSDTDTETGTDVAETTNESHSESNMT. Residues 599–611 show a composition bias toward acidic residues; it reads PTDDDDSDTDTET. Residues 616–629 show a composition bias toward polar residues; sequence AETTNESHSESNMT. One can recognise a tRNA-binding domain in the interval 643 to 741; it reads EFEELDLRVA…EDADPGTSIQ (99 aa).

This sequence belongs to the class-I aminoacyl-tRNA synthetase family. MetG type 1 subfamily. Homodimer. Zn(2+) is required as a cofactor.

It is found in the cytoplasm. The enzyme catalyses tRNA(Met) + L-methionine + ATP = L-methionyl-tRNA(Met) + AMP + diphosphate. Functionally, is required not only for elongation of protein synthesis but also for the initiation of all mRNA translation through initiator tRNA(fMet) aminoacylation. This is Methionine--tRNA ligase from Haloquadratum walsbyi (strain DSM 16790 / HBSQ001).